Reading from the N-terminus, the 269-residue chain is MKNNHTSLKSPLDEEDELKTDHEIDLEKGPLPEYDSEEESTLPPYSDHALVNNPPNTHRENHSYRTTDNSSPLLIKLLISFTSIILFNAPAVCYLKYKDAFFKNYGAAEWTLFGFWCLVCTLALIFLTYFYETWTKAVKVTVISLAKCVKVTAIFLAQCVKACGKGIKHFLKKWENMPMAFSEVFLFNILVGSPRMNLRYIFGDRWGLKCSLADHIIFVVLSILVFIAETVKPGSIRVNLIRKMGYEAKQQVNEYTAVPLREMNPESEA.

A disordered region spans residues 1–67 (MKNNHTSLKS…HRENHSYRTT (67 aa)). A compositionally biased stretch (basic and acidic residues) spans 19 to 30 (KTDHEIDLEKGP). 5 consecutive transmembrane segments (helical) span residues 73-93 (LLIK…PAVC), 110-130 (WTLF…LTYF), 140-160 (VTVI…AQCV), 174-194 (WENM…VGSP), and 216-236 (IIFV…PGSI).

It belongs to the WTF family. Homomer. Interacts with other proteins that exhibit high sequence similarity.

Its subcellular location is the spore membrane. It localises to the vacuole membrane. In terms of biological role, acts as a suppressor component of the dual wtf meiotic drive system, and can suppress but not confer meiotic drive by compatible poisons. Wtf meiotic drive systems promote unequal transmission of alleles from the parental zygote to progeny spores by encoding a poison and an antidote from the same locus; the poison is trans-acting and forms toxic aggregates in all spores within an ascus, wherease the antidote is spore-specific and targets aggregates for degradation by the vacuole. Meiotic drive by wtf systems therefore lead to poisoning of all progeny that do not inherit the dual poison/antidote allele, or express a compatible antidote. The sequence is that of Meiotic drive suppressor wtf5 from Schizosaccharomyces kambucha (Fission yeast).